A 157-amino-acid polypeptide reads, in one-letter code: MLKIQGVKHFEKSRFFPFFSQNIRSFKYLALIGLGSNIEPEKKRFDMLFRVMMDDKRFKILSTSPMLINEAFGFKEQKDFTNAVMLIQTNLHARALLKVLLYYEVKFKRKRTFKNAPRTLDLDLLYFSQKVKRDKWCEVPHKGAKERVSVILPLGMI.

This sequence belongs to the HPPK family.

It catalyses the reaction 6-hydroxymethyl-7,8-dihydropterin + ATP = (7,8-dihydropterin-6-yl)methyl diphosphate + AMP + H(+). The protein operates within cofactor biosynthesis; tetrahydrofolate biosynthesis; 2-amino-4-hydroxy-6-hydroxymethyl-7,8-dihydropteridine diphosphate from 7,8-dihydroneopterin triphosphate: step 4/4. Catalyzes the transfer of pyrophosphate from adenosine triphosphate (ATP) to 6-hydroxymethyl-7,8-dihydropterin, an enzymatic step in folate biosynthesis pathway. This chain is 2-amino-4-hydroxy-6-hydroxymethyldihydropteridine pyrophosphokinase (folK), found in Campylobacter jejuni subsp. jejuni serotype O:2 (strain ATCC 700819 / NCTC 11168).